An 80-amino-acid polypeptide reads, in one-letter code: MLSKILGIFKGKEKIEEKSNKIIEIDYNKCKNCLSCYRVCKNNVFAIKNNRVVVKNENNCTKCGECLKVCRYGAIILYDA.

4Fe-4S ferredoxin-type domains follow at residues 21–49 and 50–80; these read KIIEIDYNKCKNCLSCYRVCKNNVFAIKN and NRVVVKNENNCTKCGECLKVCRYGAIILYDA. [4Fe-4S] cluster is bound by residues C30, C33, C36, C40, C60, C63, C66, and C70.

[4Fe-4S] cluster serves as cofactor.

This is an uncharacterized protein from Methanocaldococcus jannaschii (strain ATCC 43067 / DSM 2661 / JAL-1 / JCM 10045 / NBRC 100440) (Methanococcus jannaschii).